The chain runs to 376 residues: uncharacterized protein (376 aa).

The helical transmembrane segment at 24-44 threads the bilayer; sequence YLSIISIISVFLLNSSIVYSC. A Zn(2+)-binding site is contributed by H251.

This sequence belongs to the peptidase M23B family. Requires Zn(2+) as cofactor.

It is found in the cell membrane. This is an uncharacterized protein from Buchnera aphidicola subsp. Baizongia pistaciae (strain Bp).